We begin with the raw amino-acid sequence, 415 residues long: Probable G-protein coupled receptor 19 (415 aa).

Residues 1 to 69 (MGFDHRMETD…LNPGEVATAS (69 aa)) are Extracellular-facing. Asn-25 and Asn-52 each carry an N-linked (GlcNAc...) asparagine glycan. Residues 70–90 (IFFGALWLFSIFGNSLVCLVI) form a helical membrane-spanning segment. At 91–102 (HRSRRTQSTTNY) the chain is on the cytoplasmic side. The helical transmembrane segment at 103 to 123 (FVVSMACADLLISVASTPFVV) threads the bilayer. Residues 124 to 152 (LQFTTGRWTLGSAMCKVVRYFQYLTPGVQ) are Extracellular-facing. Cys-138 and Cys-210 are joined by a disulfide. A helical transmembrane segment spans residues 153–173 (IYVLLSICIDRFYTIVYPLSF). Residues 174–182 (KVSREKAKR) lie on the Cytoplasmic side of the membrane. The helical transmembrane segment at 183-203 (MIAASWILDAAFVTPVFFFYG) threads the bilayer. Residues 204 to 221 (SNWDSHCNYFLPPSWEGT) are Extracellular-facing. Residues 222–242 (AYTVIHFLVGFVIPSVLIILF) traverse the membrane as a helical segment. Residues 243-277 (YQKVIKYIWRIGTDGRTLRRTMNIVPRTKVKTVKM) lie on the Cytoplasmic side of the membrane. A helical transmembrane segment spans residues 278–298 (FLLLNLVFLFSWLPFHVAQLW). Topologically, residues 299–309 (HPHEQDYRKSS) are extracellular. Residues 310-332 (LVFTAVTWVSFSSSASKPTLYSI) traverse the membrane as a helical segment. The Cytoplasmic segment spans residues 333 to 415 (YNANFRRGMK…INSNPPNTFV (83 aa)).

It belongs to the G-protein coupled receptor 1 family. In terms of tissue distribution, abundant expression in the brain.

Its subcellular location is the cell membrane. Its function is as follows. G-protein coupled receptor that plays a role in the regulation of circadian rhythms and energy metabolism. Participates in maintaining proper circadian gene expression in the suprachiasmatic nucleus (SCN), the locus of the master circadian clock in the brain. May function as a coordinator of aging-associated metabolic dysfunction, stress response, DNA integrity management, and eventual senescence. Upon binding to adropin, modulates mitochondrial energy metabolism via the p44/42-PDK4 signaling pathway, influencing pyruvate dehydrogenase activity. This chain is Probable G-protein coupled receptor 19 (Gpr19), found in Rattus norvegicus (Rat).